Here is a 762-residue protein sequence, read N- to C-terminus: ABC-type oligopeptide transporter ABCB9 (762 aa).

A run of 8 helical transmembrane segments spans residues 7-27, 47-67, 84-104, 116-136, 181-201, 221-241, 315-335, and 412-432; these read VVVT…IYAF, VLDL…ATIG, LVIT…LLLF, FWAL…LWGL, VAFL…ETFL, FTTA…AAGI, VFMF…FPII, and SGLT…HLVI. The 284-residue stretch at 184–467 folds into the ABC transmembrane type-1 domain; sequence LVAASFFLIV…VGSVYSGLMQ (284 aa). Positions 500 to 736 constitute an ABC transporter domain; sequence VDFENVTFTY…GGLYAKLVQR (237 aa). 535–542 is a binding site for ATP; sequence GPSGSGKS.

Belongs to the ABC transporter superfamily. ABCB family. MHC peptide exporter (TC 3.A.1.209) subfamily. As to quaternary structure, homodimer. Interacts (via TMD0 region) with LAMP1; this interaction strongly stabilizes ABCB9 and protects ABCB9 against lysosomal degradation. Interacts (via TMD0 region) with LAMP2 (isoform LAMP-2B). Interacts (via TMD0) with YIF1B; this interaction allows (but is not essential) the ER-to-Golgi trafficking and strongly depends on a salt bridge within TMD0. In terms of tissue distribution, found in testis, particularly in the Sertoli cells of the seminiferous tubules. Also expressed in kidney, brain, heart, lung, spleen, thymus, intestine and testis. Higher expression detected in brain and testis than in thymus and intestine.

Its subcellular location is the lysosome membrane. It carries out the reaction a [oligopeptide](in) + ATP + H2O = a [oligopeptide](out) + ADP + phosphate + H(+). In terms of biological role, ATP-dependent low-affinity peptide transporter which translocates a broad spectrum of peptides from the cytosol to the lysosomal lumen for degradation. Displays a broad peptide length specificity from 6-mer up to at least 59-mer peptides with an optimum of 23-mers. Binds and transports smaller and larger peptides with the same affinity. Favors positively charged, aromatic or hydrophobic residues in the N- and C-terminal positions whereas negatively charged residues as well as asparagine and methionine are not favored. The protein is ABC-type oligopeptide transporter ABCB9 of Rattus norvegicus (Rat).